We begin with the raw amino-acid sequence, 618 residues long: Crinkler effector protein 16 (618 aa).

Positions 1 to 19 (MVVVSLQCAIVGQAGSSFD) are cleaved as a signal peptide. Positions 18-57 (FDVEIDDGAKVSKLKDAIKAKKPNDFKVVDADKLHLFLAK) are LQLFLAK domain. The interval 58-139 (QPVEDESGKE…NMELPSSEQI (82 aa)) is DWL domain. Positions 140–146 (HVLVVVP) match the HVLVXXP motif motif. The N-linked (GlcNAc...) asparagine glycan is linked to asparagine 534.

It belongs to the Crinkler effector family.

It localises to the secreted. The protein resides in the host nucleus. Its function is as follows. Secreted effector that elicits necrosis in host plants, a characteristic of plant innate immunity. This chain is Crinkler effector protein 16, found in Phytophthora infestans (Potato late blight agent).